The following is a 165-amino-acid chain: V-type proton ATPase 16 kDa proteolipid subunit (165 aa).

Residues 1-10 (MSSTFSGDET) are Lumenal-facing. Residues 11-33 (APFFGFLGAAAALVFSCMGAAYG) traverse the membrane as a helical segment. Topologically, residues 34 to 55 (TAKSGVGVASMGVMRPELVMKS) are cytoplasmic. A helical membrane pass occupies residues 56 to 76 (IVPVVMAGVLGIYGLIIAVII). The Lumenal portion of the chain corresponds to 77 to 95 (STGINPKAKSYYLFDGYAH). A helical transmembrane segment spans residues 96–117 (LSSGLACGLAGLSAGMAIGIVG). Residues 118–129 (DAGVRANAQQPK) lie on the Cytoplasmic side of the membrane. A helical transmembrane segment spans residues 130–155 (LFVGMILILIFAEALALYGLIVGIIL). Residues 156-165 (SSRAGQSRAD) lie on the Lumenal side of the membrane.

It belongs to the V-ATPase proteolipid subunit family. V-ATPase is a heteromultimeric enzyme composed of a peripheral catalytic V1 complex (main components: subunits A, B, C, D, E, and F) attached to an integral membrane V0 proton pore complex (main component: the proteolipid protein; which is present as a hexamer that forms the proton-conducting pore). As to expression, higher expression in leaves, followed by roots and weakly in flowers. Expression in leaves is light-dependent.

It localises to the vacuole membrane. Proton-conducting pore forming subunit of the membrane integral V0 complex of vacuolar ATPase. V-ATPase is responsible for acidifying a variety of intracellular compartments in eukaryotic cells. Necessary for the crassulacean acid metabolism. This chain is V-type proton ATPase 16 kDa proteolipid subunit, found in Kalanchoe daigremontiana (Devil's backbone).